The sequence spans 448 residues: Probable metal transport system membrane protein CPn_0347/CP_0413/CPj0347/CpB0354 (448 aa).

A run of 8 helical transmembrane segments spans residues 15 to 35 (FLAV…LLIS), 47 to 67 (ASYP…SLQA), 69 to 89 (IFWI…IIVF), 100 to 120 (SALC…ASYV), 144 to 164 (FLEA…LWWW), 193 to 213 (LIFI…VLIS), 233 to 253 (ILIL…YISV), and 270 to 290 (LPTG…CLLF).

The protein belongs to the ABC-3 integral membrane protein family.

The protein resides in the cell inner membrane. In terms of biological role, part of an ATP-driven transport system CPn_0346/CPn_0347/CPn_0348/CPn_0349 for a metal. This Chlamydia pneumoniae (Chlamydophila pneumoniae) protein is Probable metal transport system membrane protein CPn_0347/CP_0413/CPj0347/CpB0354.